The chain runs to 361 residues: Putative F-box protein At3g25460 (361 aa).

In terms of domain architecture, F-box spans 1-45 (MMMPELPEDLLVEILCRVPATSLKRLRSTCKLWNHLYNDKRFKSK).

The polypeptide is Putative F-box protein At3g25460 (Arabidopsis thaliana (Mouse-ear cress)).